Consider the following 401-residue polypeptide: Formate-dependent phosphoribosylglycinamide formyltransferase (401 aa).

Residues 27 to 28 and Glu-87 contribute to the N(1)-(5-phospho-beta-D-ribosyl)glycinamide site; that span reads EL. ATP is bound by residues Arg-119, Lys-160, 165–170, 200–203, and Glu-208; these read SSGKGQ and EELV. Residues 124 to 313 enclose the ATP-grasp domain; the sequence is EFAAEEVGVT…QFDLHLRAIL (190 aa). Mg(2+) is bound by residues Glu-272 and Glu-284. Residues Asp-291, Lys-361, and 368–369 each bind N(1)-(5-phospho-beta-D-ribosyl)glycinamide; that span reads RR.

Belongs to the PurK/PurT family. Homodimer.

The catalysed reaction is N(1)-(5-phospho-beta-D-ribosyl)glycinamide + formate + ATP = N(2)-formyl-N(1)-(5-phospho-beta-D-ribosyl)glycinamide + ADP + phosphate + H(+). It participates in purine metabolism; IMP biosynthesis via de novo pathway; N(2)-formyl-N(1)-(5-phospho-D-ribosyl)glycinamide from N(1)-(5-phospho-D-ribosyl)glycinamide (formate route): step 1/1. Its function is as follows. Involved in the de novo purine biosynthesis. Catalyzes the transfer of formate to 5-phospho-ribosyl-glycinamide (GAR), producing 5-phospho-ribosyl-N-formylglycinamide (FGAR). Formate is provided by PurU via hydrolysis of 10-formyl-tetrahydrofolate. In Haloquadratum walsbyi (strain DSM 16790 / HBSQ001), this protein is Formate-dependent phosphoribosylglycinamide formyltransferase.